The following is a 393-amino-acid chain: Elongation factor Tu (393 aa).

Positions Lys10–Val203 constitute a tr-type G domain. Residues Gly19 to Thr26 are G1. Gly19–Thr26 serves as a coordination point for GTP. Residue Thr26 coordinates Mg(2+). A G2 region spans residues Gly60–Ser64. A G3 region spans residues Asp81–Gly84. Residues Asp81 to His85 and Asn136 to Asp139 contribute to the GTP site. The tract at residues Asn136–Asp139 is G4. The segment at Ser173 to Leu175 is G5.

Belongs to the TRAFAC class translation factor GTPase superfamily. Classic translation factor GTPase family. EF-Tu/EF-1A subfamily. In terms of assembly, monomer.

The protein resides in the cytoplasm. The enzyme catalyses GTP + H2O = GDP + phosphate + H(+). In terms of biological role, GTP hydrolase that promotes the GTP-dependent binding of aminoacyl-tRNA to the A-site of ribosomes during protein biosynthesis. This is Elongation factor Tu from Pelodictyon phaeoclathratiforme (strain DSM 5477 / BU-1).